A 1100-amino-acid polypeptide reads, in one-letter code: DNA-directed RNA polymerase subunit beta (1100 aa).

Residues 1064–1100 (YEEDKEVDLMADVNQRRTPSRPTYESMSVGDIDDDDD) are disordered. The span at 1079–1089 (RRTPSRPTYES) shows a compositional bias: polar residues.

Belongs to the RNA polymerase beta chain family. In terms of assembly, in cyanobacteria the RNAP catalytic core is composed of 2 alpha, 1 beta, 1 beta', 1 gamma and 1 omega subunit. When a sigma factor is associated with the core the holoenzyme is formed, which can initiate transcription.

The catalysed reaction is RNA(n) + a ribonucleoside 5'-triphosphate = RNA(n+1) + diphosphate. Functionally, DNA-dependent RNA polymerase catalyzes the transcription of DNA into RNA using the four ribonucleoside triphosphates as substrates. This is DNA-directed RNA polymerase subunit beta from Synechococcus sp. (strain ATCC 27144 / PCC 6301 / SAUG 1402/1) (Anacystis nidulans).